Here is a 276-residue protein sequence, read N- to C-terminus: DnaJ homolog subfamily C member 27-B (276 aa).

GTP is bound by residues 23-30 (GNAEVGKS), 71-75 (DMAGH), and 137-140 (NKID). In terms of domain architecture, J spans 220-276 (DSWDMLGVKPGATRDEVNKAYRKLAVLLHPDKCVAPGSEDAFKAVVNARTALLKNIK).

It belongs to the small GTPase superfamily. Rab family.

The protein localises to the nucleus. Functionally, GTPase possibly involved in regulation of the MEK/ERK pathway. The polypeptide is DnaJ homolog subfamily C member 27-B (dnajc27-b) (Xenopus laevis (African clawed frog)).